We begin with the raw amino-acid sequence, 111 residues long: uncharacterized protein (111 aa).

2 consecutive transmembrane segments (helical) span residues 45–65 and 91–111; these read AFLIPVKYTAATVLLALLLVI and LPAGIGLAVLTKVLKHLILHI.

It localises to the cell membrane. This is an uncharacterized protein from Methanothermobacter thermautotrophicus (strain ATCC 29096 / DSM 1053 / JCM 10044 / NBRC 100330 / Delta H) (Methanobacterium thermoautotrophicum).